A 177-amino-acid polypeptide reads, in one-letter code: UPF0178 protein TP_0845 (177 aa).

The interval 155–177 (EAKTGEEQCDWPSAQGKSQTGRR) is disordered.

Belongs to the UPF0178 family.

This chain is UPF0178 protein TP_0845, found in Treponema pallidum (strain Nichols).